The primary structure comprises 416 residues: UDP-N-acetylglucosamine 1-carboxyvinyltransferase (416 aa).

22–23 serves as a coordination point for phosphoenolpyruvate; that stretch reads KN. A UDP-N-acetyl-alpha-D-glucosamine-binding site is contributed by Arg91. Catalysis depends on Cys115, which acts as the Proton donor. Cys115 is modified (2-(S-cysteinyl)pyruvic acid O-phosphothioketal). Asp304 and Ile326 together coordinate UDP-N-acetyl-alpha-D-glucosamine.

This sequence belongs to the EPSP synthase family. MurA subfamily.

It localises to the cytoplasm. The catalysed reaction is phosphoenolpyruvate + UDP-N-acetyl-alpha-D-glucosamine = UDP-N-acetyl-3-O-(1-carboxyvinyl)-alpha-D-glucosamine + phosphate. It functions in the pathway cell wall biogenesis; peptidoglycan biosynthesis. Its function is as follows. Cell wall formation. Adds enolpyruvyl to UDP-N-acetylglucosamine. This Thermodesulfovibrio yellowstonii (strain ATCC 51303 / DSM 11347 / YP87) protein is UDP-N-acetylglucosamine 1-carboxyvinyltransferase.